The primary structure comprises 162 residues: Phospholipase A and acyltransferase 3 (162 aa).

Over 1-133 the chain is Cytoplasmic; sequence MRAPIPEPKP…VARSDQVRDV (133 aa). The region spanning 13–129 is the LRAT domain; the sequence is LIEIFRPFYR…LRYGVARSDQ (117 aa). Active-site residues include H23 and H35. The active-site Acyl-thioester intermediate is C113. A helical membrane pass occupies residues 134-154; sequence IIAASAAGMGLAAMSLIGVMF. Residues 155–162 lie on the Lumenal side of the membrane; it reads SRNKRQKQ.

This sequence belongs to the H-rev107 family. In terms of assembly, interacts with PPP2R1A; this interaction might decrease PP2A activity.

It is found in the cell membrane. The protein localises to the cytoplasm. It localises to the cytosol. The protein resides in the perinuclear region. Its subcellular location is the peroxisome membrane. It is found in the mitochondrion membrane. The protein localises to the nucleus envelope. It localises to the lysosome membrane. The protein resides in the endoplasmic reticulum membrane. The enzyme catalyses a 1,2-diacyl-sn-glycero-3-phosphocholine + H2O = a 1-acyl-sn-glycero-3-phosphocholine + a fatty acid + H(+). It catalyses the reaction a 1,2-diacyl-sn-glycero-3-phosphocholine + H2O = a 2-acyl-sn-glycero-3-phosphocholine + a fatty acid + H(+). It carries out the reaction 1,2-dihexadecanoyl-sn-glycero-3-phosphocholine + H2O = 1-hexadecanoyl-sn-glycero-3-phosphocholine + hexadecanoate + H(+). The catalysed reaction is 1,2-dihexadecanoyl-sn-glycero-3-phosphocholine + H2O = 2-hexadecanoyl-sn-glycero-3-phosphocholine + hexadecanoate + H(+). The enzyme catalyses 1-hexadecanoyl-2-(9Z-octadecenoyl)-sn-glycero-3-phosphocholine + H2O = 2-(9Z-octadecenoyl)-sn-glycero-3-phosphocholine + hexadecanoate + H(+). It catalyses the reaction 1-hexadecanoyl-2-(9Z-octadecenoyl)-sn-glycero-3-phosphocholine + H2O = 1-hexadecanoyl-sn-glycero-3-phosphocholine + (9Z)-octadecenoate + H(+). It carries out the reaction 1-hexadecanoyl-2-(5Z,8Z,11Z,14Z-eicosatetraenoyl)-sn-glycero-3-phosphocholine + H2O = 1-hexadecanoyl-sn-glycero-3-phosphocholine + (5Z,8Z,11Z,14Z)-eicosatetraenoate + H(+). The catalysed reaction is 1-hexadecanoyl-2-(5Z,8Z,11Z,14Z-eicosatetraenoyl)-sn-glycero-3-phosphocholine + H2O = 2-(5Z,8Z,11Z,14Z)-eicosatetraenoyl-sn-glycero-3-phosphocholine + hexadecanoate + H(+). The enzyme catalyses 1-hexadecanoyl-2-(9Z,12Z-octadecadienoyl)-sn-glycero-3-phosphoethanolamine + H2O = 1-hexadecanoyl-sn-glycero-3-phosphoethanolamine + (9Z,12Z)-octadecadienoate + H(+). It catalyses the reaction 1-hexadecanoyl-2-(9Z,12Z-octadecadienoyl)-sn-glycero-3-phosphoethanolamine + H2O = 2-(9Z,12Z)-octadecadienoyl-sn-glycero-3-phosphoethanolamine + hexadecanoate + H(+). It carries out the reaction 1-hexadecanoyl-2-(5Z,8Z,11Z,14Z-eicosatetraenoyl)-sn-glycero-3-phosphoethanolamine + H2O = 1-hexadecanoyl-sn-glycero-3-phosphoethanolamine + (5Z,8Z,11Z,14Z)-eicosatetraenoate + H(+). The catalysed reaction is 1-hexadecanoyl-2-(5Z,8Z,11Z,14Z-eicosatetraenoyl)-sn-glycero-3-phosphoethanolamine + H2O = 2-(5Z,8Z,11Z,14Z)-eicosatetraenoyl-sn-glycero-3-phosphoethanolamine + hexadecanoate + H(+). The enzyme catalyses 1-hexanoyl-2-acyl-sn-glycero-3-phosphocholine + H2O = hexanoate + a 2-acyl-sn-glycero-3-phosphocholine + H(+). It catalyses the reaction 1-hexanoyl-2-acyl-sn-glycero-3-phosphocholine + H2O = 1-hexanoyl-sn-glycero-3-phosphocholine + a fatty acid + H(+). It carries out the reaction 1,2-diheptadecanoyl-sn-glycero-3-phosphoethanolamine + 1-(9Z-octadecenoyl)-2-hexadecanoyl-sn-glycero-3-phosphocholine = 1,2-diheptadecanoyl-sn-glycero-3-phospho-N-hexadecanoyl-ethanolamine + 1-(9Z-octadecenoyl)-sn-glycero-3-phosphocholine + H(+). The catalysed reaction is 1,2-diheptadecanoyl-sn-glycero-3-phosphoethanolamine + 1-(9Z-octadecenoyl)-2-hexadecanoyl-sn-glycero-3-phosphocholine = 1,2-diheptadecanoyl-sn-glycero-3-phospho-N-(9Z-octadecenoyl)-ethanolamine + 2-hexadecanoyl-sn-glycero-3-phosphocholine + H(+). The enzyme catalyses 1,2-dihexanoyl-sn-glycero-3-phosphoethanolamine + 2-heptanoyl-sn-glycero-3-phosphocholine = hexanoyl-sn-glycero-3-phosphoethanolamine + 1-hexanoyl-2-heptanoyl-sn-glycero-3-phosphocholine. It catalyses the reaction 1-hexadecanoyl-2-octadecanoyl-sn-glycero-3-phosphocholine + H2O = octadecanoate + 1-hexadecanoyl-sn-glycero-3-phosphocholine + H(+). It carries out the reaction 1-hexadecanoyl-2-octadecanoyl-sn-glycero-3-phosphocholine + H2O = 2-octadecanoyl-sn-glycero-3-phosphocholine + hexadecanoate + H(+). The catalysed reaction is 1-octadecanoyl-2-hexadecanoyl-sn-glycero-3-phosphocholine + H2O = 1-octadecanoyl-sn-glycero-3-phosphocholine + hexadecanoate + H(+). The enzyme catalyses 1-octadecanoyl-2-hexadecanoyl-sn-glycero-3-phosphocholine + H2O = 2-hexadecanoyl-sn-glycero-3-phosphocholine + octadecanoate + H(+). It catalyses the reaction 1-hexadecanoyl-2-(9Z,12Z-octadecadienoyl)-sn-glycero-3-phosphocholine + H2O = (9Z,12Z)-octadecadienoate + 1-hexadecanoyl-sn-glycero-3-phosphocholine + H(+). It carries out the reaction 1-hexadecanoyl-2-(9Z,12Z-octadecadienoyl)-sn-glycero-3-phosphocholine + H2O = 2-(9Z,12Z-octadecadienoyl)-sn-glycero-3-phosphocholine + hexadecanoate + H(+). The catalysed reaction is 1,2-di-(9Z-octadecenoyl)-sn-glycero-3-phosphocholine + H2O = 2-(9Z-octadecenoyl)-sn-glycero-3-phosphocholine + (9Z)-octadecenoate + H(+). The enzyme catalyses 1,2-dihexadecanoyl-sn-glycero-3-phosphocholine + H2O = hexadecanoyl-sn-glycero-3-phosphocholine + hexadecanoate + H(+). It catalyses the reaction 1,2-di-(9Z-octadecenoyl)-sn-glycero-3-phosphocholine + H2O = 1-(9Z-octadecenoyl)-sn-glycero-3-phosphocholine + (9Z)-octadecenoate + H(+). It carries out the reaction 1,2-di-(9Z-octadecenoyl)-sn-glycero-3-phosphoethanolamine + 1,2-dihexadecanoyl-sn-glycero-3-phosphocholine = hexadecanoyl-sn-glycero-3-phosphocholine + N-hexadecanoyl-1,2-di-(9Z-octadecenoyl)-sn-glycero-3-phosphoethanolamine + H(+). The catalysed reaction is 1,2-di-(9Z,12Z-octadecadienoyl)-sn-glycero-3-phosphocholine + H2O = 1-(9Z,12Z)-octadecadienoyl-sn-glycero-3-phosphocholine + (9Z,12Z)-octadecadienoate + H(+). Its function is as follows. Exhibits both phospholipase A1/2 and acyltransferase activities. Shows phospholipase A1 (PLA1) and A2 (PLA2), catalyzing the calcium-independent release of fatty acids from the sn-1 or sn-2 position of glycerophospholipids. For most substrates, PLA1 activity is much higher than PLA2 activity. Shows O-acyltransferase activity, catalyzing the transfer of a fatty acyl group from glycerophospholipid to the hydroxyl group of lysophospholipid. Shows N-acyltransferase activity, catalyzing the calcium-independent transfer of a fatty acyl group at the sn-1 position of phosphatidylcholine (PC) and other glycerophospholipids to the primary amine of phosphatidylethanolamine (PE), forming N-acylphosphatidylethanolamine (NAPE), which serves as precursor for N-acylethanolamines (NAEs). Exhibits high N-acyltransferase activity and low phospholipase A1/2 activity. Required for complete organelle rupture and degradation that occur during eye lens terminal differentiation, when fiber cells that compose the lens degrade all membrane-bound organelles in order to provide lens with transparency to allow the passage of light. Organelle membrane degradation is probably catalyzed by the phospholipase activity. Plays a role in phospholipid metabolism and adipogenesis. The protein is Phospholipase A and acyltransferase 3 of Pongo abelii (Sumatran orangutan).